Here is a 521-residue protein sequence, read N- to C-terminus: Small ribosomal subunit protein mL104 (rPPR9) (521 aa).

Residues 1-59 constitute a mitochondrion transit peptide; the sequence is MPPSLPSLQLRRLLLRSFISSSSVNTLQSQPRIISSKPLFSPLPPSRSSIFSTFPSRFF. 8 PPR repeats span residues 174–204, 210–240, 244–278, 279–313, 321–355, 356–390, 393–427, and 428–462; these read GGKT…MEND, DKES…TANE, DENI…GFEI, GTKA…LLEM, NTET…GCQP, DAET…GYGE, NKKE…GCKP, and GIKT…GIAV. Positions 480 to 495 are enriched in basic and acidic residues; the sequence is EVDSNVKKRETLPEKT. The segment at 480–499 is disordered; sequence EVDSNVKKRETLPEKTARKK. A Nuclear localization signal motif is present at residues 486–503; sequence KKRETLPEKTARKKKRLK.

This sequence belongs to the PPR family. P subfamily. Interacts with NAP1;1 and TCP8. Able to bind mitochondrial RNA in vitro. Component of the mitochondrial ribosome small subunit. As to expression, expressed in root tips, lateral root primordia and leaf primordia. Highly detected in the mature pollen grains.

It localises to the mitochondrion matrix. Its subcellular location is the nucleus. In terms of biological role, RNA-binding protein that functions in both mitochondrion and nucleus. In mitochondrion, it is associated with polysomes and may play a role in translation. Required during embryogenesis. In nucleus, might be involved in the regulation of its own gene expression. This Arabidopsis thaliana (Mouse-ear cress) protein is Small ribosomal subunit protein mL104 (rPPR9) (PNM1).